The following is a 182-amino-acid chain: Organic solute transporter subunit beta (182 aa).

Residues 1–20 (MSGLLKYLFGCFILCLLLQG) form the signal peptide. At 21–64 (KTHMTSATISKPHETIDIEKQNMTGERNSTLAQQLSFPMEDPTN) the chain is on the extracellular side. Asparagine 42 and asparagine 48 each carry an N-linked (GlcNAc...) asparagine glycan. Residues 65-85 (WNYAILALAFVVLFLAFLILA) form a helical membrane-spanning segment. At 86–182 (QNSRANRTRK…LYTDSKEDDV (97 aa)) the chain is on the cytoplasmic side.

The protein belongs to the OST-beta family. As to quaternary structure, interacts with slc51a. The Ost-alpha/Ost-beta complex is a heterodimer composed of alpha (slc51a) and beta (slc51b) subunit; may induce the transport of slc51a from the endoplasmic reticulum to the plasma membrane. Expressed in liver.

The protein resides in the cell membrane. Essential component of the Ost-alpha/Ost-beta complex, a heterodimer that acts as the intestinal basolateral transporter responsible for bile acid export from enterocytes into portal blood. Efficiently transports the major species of bile acids. May modulate slc51a glycosylation, membrane trafficking and stability activities. Able to transport taurocholate, estrone sulfate, digoxin, and prostaglandin E(2), but not p-aminohippurate or S-dinitrophenyl glutathione. The sequence is that of Organic solute transporter subunit beta (slc51b) from Leucoraja erinaceus (Little skate).